The chain runs to 170 residues: Probable inactive uracil-DNA glycosylase, mitochondrial (170 aa).

A mitochondrion-targeting transit peptide spans 1–53 (MALSTPKTLMDFFQPAKRLKASPSSSSSFPAVSVAGRSRDLGSVANSPPRVTV).

Belongs to the uracil-DNA glycosylase (UDG) superfamily. UNG family.

Its subcellular location is the mitochondrion. Probable inactive paralog of AtUNG (AC Q9LIH6) generated by a gene duplication event and subsequently disrupted by at least two transposon insertions. This is Probable inactive uracil-DNA glycosylase, mitochondrial from Arabidopsis thaliana (Mouse-ear cress).